A 133-amino-acid polypeptide reads, in one-letter code: Nickel-responsive regulator (133 aa).

Residues histidine 76, histidine 87, histidine 89, and cysteine 95 each contribute to the Ni(2+) site.

This sequence belongs to the transcriptional regulatory CopG/NikR family. As to quaternary structure, homotetramer. The cofactor is Ni(2+).

Transcriptional repressor of the nikABCDE operon. Is active in the presence of excessive concentrations of intracellular nickel. The chain is Nickel-responsive regulator from Salmonella arizonae (strain ATCC BAA-731 / CDC346-86 / RSK2980).